We begin with the raw amino-acid sequence, 1059 residues long: Translation initiation factor IF-2 (1059 aa).

2 stretches are compositionally biased toward polar residues: residues 55 to 75 (LPHS…NQDS) and 107 to 126 (KINN…NNQV). Disordered regions lie at residues 55–81 (LPHS…GYNE), 93–394 (PKPL…RLRL), and 418–468 (SLSL…QSAE). Residues 178–187 (DSNEKSKVEV) show a composition bias toward basic and acidic residues. Positions 202-211 (LNRNLRNTGV) are enriched in polar residues. The span at 216 to 229 (QKNKKPKQEGKKRK) shows a compositional bias: basic residues. Composition is skewed to basic and acidic residues over residues 230–252 (DKEE…DTSI) and 259–273 (SKKE…RESV). Positions 274–284 (KTSASDTSSQL) are enriched in polar residues. Composition is skewed to basic and acidic residues over residues 291–300 (KPTVKLKQEQ) and 359–368 (LTKDKKVSKW). Low complexity predominate over residues 452–463 (SHESVQSESNEQ). The region spanning 556–733 (RRPPVVTIMG…EVEDLQANPE (178 aa)) is the tr-type G domain. The tract at residues 565–572 (GHVDHGKT) is G1. 565–572 (GHVDHGKT) is a binding site for GTP. Residues 590 to 594 (GITQH) form a G2 region. The segment at 615 to 618 (DTPG) is G3. GTP contacts are provided by residues 615-619 (DTPGH) and 669-672 (NKID). The G4 stretch occupies residues 669–672 (NKID). Positions 705–707 (SAI) are G5.

This sequence belongs to the TRAFAC class translation factor GTPase superfamily. Classic translation factor GTPase family. IF-2 subfamily.

The protein localises to the cytoplasm. In terms of biological role, one of the essential components for the initiation of protein synthesis. Protects formylmethionyl-tRNA from spontaneous hydrolysis and promotes its binding to the 30S ribosomal subunits. Also involved in the hydrolysis of GTP during the formation of the 70S ribosomal complex. This chain is Translation initiation factor IF-2, found in Trichodesmium erythraeum (strain IMS101).